The chain runs to 249 residues: tRNA pseudouridine synthase A (249 aa).

Aspartate 54 acts as the Nucleophile in catalysis. Substrate is bound at residue tyrosine 111.

Belongs to the tRNA pseudouridine synthase TruA family. As to quaternary structure, homodimer.

The catalysed reaction is uridine(38/39/40) in tRNA = pseudouridine(38/39/40) in tRNA. Its function is as follows. Formation of pseudouridine at positions 38, 39 and 40 in the anticodon stem and loop of transfer RNAs. The chain is tRNA pseudouridine synthase A from Mycoplasma capricolum subsp. capricolum (strain California kid / ATCC 27343 / NCTC 10154).